The sequence spans 211 residues: uncharacterized protein (211 aa).

The disordered stretch occupies residues 187-211; the sequence is LKVSEQENSEAPVSEPKEDEKTKKD. Positions 201-211 are enriched in basic and acidic residues; sequence EPKEDEKTKKD.

This is an uncharacterized protein from Spiroplasma citri.